A 185-amino-acid polypeptide reads, in one-letter code: Ribosome-recycling factor (185 aa).

It belongs to the RRF family.

The protein localises to the cytoplasm. Functionally, responsible for the release of ribosomes from messenger RNA at the termination of protein biosynthesis. May increase the efficiency of translation by recycling ribosomes from one round of translation to another. This Desulfosudis oleivorans (strain DSM 6200 / JCM 39069 / Hxd3) (Desulfococcus oleovorans) protein is Ribosome-recycling factor.